A 143-amino-acid polypeptide reads, in one-letter code: Nucleoside diphosphate kinase (143 aa).

ATP-binding residues include Lys11, Phe59, Arg87, Thr93, Arg104, and Asn114. Residue His117 is the Pros-phosphohistidine intermediate of the active site.

It belongs to the NDK family. As to quaternary structure, homotetramer. Requires Mg(2+) as cofactor.

It localises to the cytoplasm. The enzyme catalyses a 2'-deoxyribonucleoside 5'-diphosphate + ATP = a 2'-deoxyribonucleoside 5'-triphosphate + ADP. The catalysed reaction is a ribonucleoside 5'-diphosphate + ATP = a ribonucleoside 5'-triphosphate + ADP. Major role in the synthesis of nucleoside triphosphates other than ATP. The ATP gamma phosphate is transferred to the NDP beta phosphate via a ping-pong mechanism, using a phosphorylated active-site intermediate. The polypeptide is Nucleoside diphosphate kinase (Azotobacter vinelandii (strain DJ / ATCC BAA-1303)).